A 205-amino-acid chain; its full sequence is Small ribosomal subunit protein uS5 (205 aa).

The S5 DRBM domain maps to 49–112 (LVDEVLDINM…VSAKINLVKV (64 aa)).

Belongs to the universal ribosomal protein uS5 family. Part of the 30S ribosomal subunit. Contacts protein S4.

Its function is as follows. With S4 and S12 plays an important role in translational accuracy. This is Small ribosomal subunit protein uS5 from Methanospirillum hungatei JF-1 (strain ATCC 27890 / DSM 864 / NBRC 100397 / JF-1).